We begin with the raw amino-acid sequence, 333 residues long: Adenosine deaminase (333 aa).

His12 and His14 together coordinate Zn(2+). 3 residues coordinate substrate: His14, Asp16, and Gly170. His197 is a Zn(2+) binding site. Glu200 serves as the catalytic Proton donor. Position 278 (Asp278) interacts with Zn(2+). Asp279 serves as a coordination point for substrate.

Belongs to the metallo-dependent hydrolases superfamily. Adenosine and AMP deaminases family. Adenosine deaminase subfamily. Zn(2+) is required as a cofactor.

It catalyses the reaction adenosine + H2O + H(+) = inosine + NH4(+). The enzyme catalyses 2'-deoxyadenosine + H2O + H(+) = 2'-deoxyinosine + NH4(+). Its function is as follows. Catalyzes the hydrolytic deamination of adenosine and 2-deoxyadenosine. This chain is Adenosine deaminase, found in Escherichia coli O81 (strain ED1a).